Here is a 119-residue protein sequence, read N- to C-terminus: Large ribosomal subunit protein uL24 (119 aa).

Belongs to the universal ribosomal protein uL24 family. In terms of assembly, part of the 50S ribosomal subunit.

One of two assembly initiator proteins, it binds directly to the 5'-end of the 23S rRNA, where it nucleates assembly of the 50S subunit. Functionally, located at the polypeptide exit tunnel on the outside of the subunit. This is Large ribosomal subunit protein uL24 from Haloquadratum walsbyi (strain DSM 16790 / HBSQ001).